Here is a 191-residue protein sequence, read N- to C-terminus: UPF0312 protein Sputw3181_1309 (191 aa).

An N-terminal signal peptide occupies residues 1-22 (MKKQLLSALIGVSLLVPMAASA).

This sequence belongs to the UPF0312 family. Type 1 subfamily.

It localises to the periplasm. The polypeptide is UPF0312 protein Sputw3181_1309 (Shewanella sp. (strain W3-18-1)).